The sequence spans 128 residues: NADPH-dependent 7-cyano-7-deazaguanine reductase (128 aa).

Cys34 serves as the catalytic Thioimide intermediate. Asp41 functions as the Proton donor in the catalytic mechanism. Residues 56–58 and 75–76 each bind substrate; these read IEL and HE.

The protein belongs to the GTP cyclohydrolase I family. QueF type 1 subfamily.

The protein resides in the cytoplasm. It carries out the reaction 7-aminomethyl-7-carbaguanine + 2 NADP(+) = 7-cyano-7-deazaguanine + 2 NADPH + 3 H(+). It participates in tRNA modification; tRNA-queuosine biosynthesis. Functionally, catalyzes the NADPH-dependent reduction of 7-cyano-7-deazaguanine (preQ0) to 7-aminomethyl-7-deazaguanine (preQ1). This chain is NADPH-dependent 7-cyano-7-deazaguanine reductase, found in Ruthia magnifica subsp. Calyptogena magnifica.